Consider the following 314-residue polypeptide: Porphobilinogen deaminase (314 aa).

Cys-234 carries the post-translational modification S-(dipyrrolylmethanemethyl)cysteine.

It belongs to the HMBS family. As to quaternary structure, monomer. Dipyrromethane serves as cofactor.

It catalyses the reaction 4 porphobilinogen + H2O = hydroxymethylbilane + 4 NH4(+). It functions in the pathway porphyrin-containing compound metabolism; protoporphyrin-IX biosynthesis; coproporphyrinogen-III from 5-aminolevulinate: step 2/4. Its function is as follows. Tetrapolymerization of the monopyrrole PBG into the hydroxymethylbilane pre-uroporphyrinogen in several discrete steps. The sequence is that of Porphobilinogen deaminase from Mycobacterium ulcerans (strain Agy99).